The chain runs to 1114 residues: Brother of CDO (1114 aa).

A signal peptide spans 1 to 30 (MLRGTMTAWRGMRPEVTLACLLLATAGCFA). The Extracellular portion of the chain corresponds to 31–855 (DLNEVPQVTV…MVARSSDLPY (825 aa)). Ig-like C2-type domains lie at 36–123 (PQVT…ATVT), 129–213 (DFKL…VKTS), 235–315 (PEAQ…VILY), and 323–409 (PEVT…LRTS). Disulfide bonds link C57-C106, C150-C200, C252-C299, and C344-C391. Residues N65, N76, N98, N189, and N275 are each glycosylated (N-linked (GlcNAc...) asparagine). The disordered stretch occupies residues 422 to 474 (ELATGTPPVSPSKLGNPEQMLRGQPALPRPPTSVGPASPQCPGEKGQGAPAEA). 3 consecutive Fibronectin type-III domains span residues 474–571 (APII…GRRP), 608–703 (APDR…VVSG), and 712–812 (PVAG…TKAR). N-linked (GlcNAc...) asparagine glycosylation is present at N517. The tract at residues 577–615 (ASKEQQIQRDDPGASPQSSSQPDHGRLSPPEAPDRPTIS) is disordered. N725 and N759 each carry an N-linked (GlcNAc...) asparagine glycan. A disordered region spans residues 812–833 (RKSSGQPGRLPPPTLAPPQPPL). A compositionally biased stretch (pro residues) spans 820-833 (RLPPPTLAPPQPPL). The chain crosses the membrane as a helical span at residues 856 to 876 (LIVGVVLGSIVLIIVTFIPFC). The Cytoplasmic segment spans residues 877–1114 (LWRAWSKQKH…VSFETPPLTI (238 aa)). The segment covering 972 to 986 (QTHLGNGYDPQSHQI) has biased composition (polar residues). The segment at 972–998 (QTHLGNGYDPQSHQITRGPKSSPDEGS) is disordered.

In terms of assembly, part of a complex that contains BOC, CDON, NEO1, cadherins and CTNNB1. Interacts with NTN3. Interacts with SHH, DHH and IHH. Interacts with CDH2 and CTNNB1. Interacts with CDH15 only during the early stages of myoblast differentiation. In terms of processing, N-glycosylated. In terms of tissue distribution, detected in skeletal muscle, heart, thymus, kidney and small intestine. Detected at lower levels in brain, placenta, lung and colon mucosa.

It localises to the cell membrane. Functionally, component of a cell-surface receptor complex that mediates cell-cell interactions between muscle precursor cells. Promotes differentiation of myogenic cells. The chain is Brother of CDO (BOC) from Homo sapiens (Human).